A 312-amino-acid chain; its full sequence is MNIMKRQLCTSSKRFFSTAKNVVKYNTIQDIRNKYFTGTPLSMCTAYDFITATWVNKANCDLLLVGDSLAMTSLGYDSTITLSLNEFKYHVASVCRAEGSSMVVVDMPFGTFESGISDGLKNAIDIMKLDSKVTSVKVEVGSYTKDKYAMKFIEELCSRGIPVMAHIGLTPQKVHSLGGYKVQGSKSLLQMQELYETAMQLQKIGCWSILIECVPHKMAQFITSKLSVPTIGIGAGNGTSGQVLVISDLLGMQGDSVPKFVKQAVNMTDIATQGLKEYIASVEDRTFPERGTHTFKVKEDLWNEFLSSINEK.

The protein belongs to the PanB family.

It catalyses the reaction 3-methyl-2-oxobutanoate + (6R)-5,10-methylene-5,6,7,8-tetrahydrofolate + H2O = 2-dehydropantoate + (6S)-5,6,7,8-tetrahydrofolate. The protein operates within cofactor biosynthesis; (R)-pantothenate biosynthesis; (R)-pantoate from 3-methyl-2-oxobutanoate: step 1/2. Its function is as follows. Probable 3-methyl-2-oxobutanoate hydroxymethyltransferase required for pantothenic acid biosynthesis. Acts downstream in the pantothenic acid pathway. This chain is 3-methyl-2-oxobutanoate hydroxymethyltransferase, found in Saccharomyces cerevisiae (strain ATCC 204508 / S288c) (Baker's yeast).